The chain runs to 399 residues: Formate-dependent phosphoribosylglycinamide formyltransferase (399 aa).

N(1)-(5-phospho-beta-D-ribosyl)glycinamide is bound by residues 22–23 and E82; that span reads EL. Residues R114, K155, 160 to 165, 195 to 198, and E203 contribute to the ATP site; these read SSGKGQ and EKMI. An ATP-grasp domain is found at 119 to 308; it reads RLAAETLHLL…EFALHVRAFL (190 aa). Mg(2+) contacts are provided by E267 and E279. Residues D286, K355, and 362-363 each bind N(1)-(5-phospho-beta-D-ribosyl)glycinamide; that span reads RR.

It belongs to the PurK/PurT family. In terms of assembly, homodimer.

It carries out the reaction N(1)-(5-phospho-beta-D-ribosyl)glycinamide + formate + ATP = N(2)-formyl-N(1)-(5-phospho-beta-D-ribosyl)glycinamide + ADP + phosphate + H(+). The protein operates within purine metabolism; IMP biosynthesis via de novo pathway; N(2)-formyl-N(1)-(5-phospho-D-ribosyl)glycinamide from N(1)-(5-phospho-D-ribosyl)glycinamide (formate route): step 1/1. Involved in the de novo purine biosynthesis. Catalyzes the transfer of formate to 5-phospho-ribosyl-glycinamide (GAR), producing 5-phospho-ribosyl-N-formylglycinamide (FGAR). Formate is provided by PurU via hydrolysis of 10-formyl-tetrahydrofolate. The chain is Formate-dependent phosphoribosylglycinamide formyltransferase from Proteus mirabilis (strain HI4320).